We begin with the raw amino-acid sequence, 241 residues long: Sugar fermentation stimulation protein homolog (241 aa).

This sequence belongs to the SfsA family.

The protein is Sugar fermentation stimulation protein homolog of Trichormus variabilis (strain ATCC 29413 / PCC 7937) (Anabaena variabilis).